A 79-amino-acid chain; its full sequence is Small ribosomal subunit protein bS18 (79 aa).

Belongs to the bacterial ribosomal protein bS18 family. Part of the 30S ribosomal subunit. Forms a tight heterodimer with protein bS6.

Functionally, binds as a heterodimer with protein bS6 to the central domain of the 16S rRNA, where it helps stabilize the platform of the 30S subunit. The protein is Small ribosomal subunit protein bS18 of Ureaplasma urealyticum serovar 10 (strain ATCC 33699 / Western).